Here is a 220-residue protein sequence, read N- to C-terminus: Putative tyrosine-protein phosphatase 1 (220 aa).

The 152-residue stretch at Phe67–Gln218 folds into the Tyrosine-protein phosphatase domain.

Belongs to the protein-tyrosine phosphatase family. Non-receptor class CDC14 subfamily.

It catalyses the reaction O-phospho-L-tyrosyl-[protein] + H2O = L-tyrosyl-[protein] + phosphate. Functionally, could be inactive as the active site cysteine is modified to tryptophan. The polypeptide is Putative tyrosine-protein phosphatase 1 (PTP-1) (Orgyia pseudotsugata multicapsid polyhedrosis virus (OpMNPV)).